The sequence spans 87 residues: U3-theraphotoxin-Hhn1b (87 aa).

The first 24 residues, 1 to 24, serve as a signal peptide directing secretion; that stretch reads MVNMKASMFLTFAGLVLLFVVCYA. Positions 25–52 are excised as a propeptide; that stretch reads SESEEKEFPREMLSSIFAVDNDFKQEER. 2 cysteine pairs are disulfide-bonded: C54–C67 and C61–C72.

Belongs to the neurotoxin 10 (Hwtx-1) family. 51 (Hntx-8) subfamily. Hntx-8 sub-subfamily. Expressed by the venom gland.

It localises to the secreted. Its function is as follows. Ion channel inhibitor. The protein is U3-theraphotoxin-Hhn1b of Cyriopagopus hainanus (Chinese bird spider).